The following is a 196-amino-acid chain: Cell division protein SepF (196 aa).

The interval 16–81 (EDDEEFNEPA…KRAGSTFTKP (66 aa)) is disordered. Residues 56 to 69 (RPAQSTSKAQTQTA) are compositionally biased toward polar residues.

It belongs to the SepF family. In terms of assembly, homodimer. Interacts with FtsZ.

The protein localises to the cytoplasm. Its function is as follows. Cell division protein that is part of the divisome complex and is recruited early to the Z-ring. Probably stimulates Z-ring formation, perhaps through the cross-linking of FtsZ protofilaments. Its function overlaps with FtsA. In Lactococcus lactis subsp. lactis (strain IL1403) (Streptococcus lactis), this protein is Cell division protein SepF.